Reading from the N-terminus, the 446-residue chain is Na(+)-translocating NADH-quinone reductase subunit A (446 aa).

This sequence belongs to the NqrA family. Composed of six subunits; NqrA, NqrB, NqrC, NqrD, NqrE and NqrF.

The catalysed reaction is a ubiquinone + n Na(+)(in) + NADH + H(+) = a ubiquinol + n Na(+)(out) + NAD(+). With respect to regulation, this reaction is tightly coupled to the Na(+) pumping activity and specifically requires Na(+) for activity. Inhibited by korormicin and 2-N-heptyl-4-hydroxyquinoline N-oxide (HQNO). In terms of biological role, NQR complex catalyzes the reduction of ubiquinone-1 to ubiquinol by two successive reactions, coupled with the transport of Na(+) ions from the cytoplasm to the periplasm. NqrA to NqrE are probably involved in the second step, the conversion of ubisemiquinone to ubiquinol. This chain is Na(+)-translocating NADH-quinone reductase subunit A, found in Vibrio alginolyticus.